The primary structure comprises 122 residues: Small ribosomal subunit protein uS13 (122 aa).

The segment at 95–122 (GLPVRGQRTHTNARTRKGPAKSIAGKKK) is disordered.

This sequence belongs to the universal ribosomal protein uS13 family. In terms of assembly, part of the 30S ribosomal subunit. Forms a loose heterodimer with protein S19. Forms two bridges to the 50S subunit in the 70S ribosome.

Its function is as follows. Located at the top of the head of the 30S subunit, it contacts several helices of the 16S rRNA. In the 70S ribosome it contacts the 23S rRNA (bridge B1a) and protein L5 of the 50S subunit (bridge B1b), connecting the 2 subunits; these bridges are implicated in subunit movement. Contacts the tRNAs in the A and P-sites. The polypeptide is Small ribosomal subunit protein uS13 (Rhodopseudomonas palustris (strain BisB18)).